A 369-amino-acid chain; its full sequence is Muscleblind-like protein 1 (369 aa).

C3H1-type zinc fingers lie at residues 13–41, 47–73, 178–206, and 214–240; these read WLTLEVCREFQRGTCSRPDTECKFAHPSK, NGRVIACFDSLKGRCSRENCKYLHPPP, TDRLEVCREYQRGNCNRGENDCRFAHPAD, and DNTVTVCMDYIKGRCSREKCKYFHPPA.

The protein belongs to the muscleblind family.

It is found in the nucleus. The protein resides in the cytoplasm. It localises to the cytoplasmic granule. Involved in pre-mRNA alternative splicing regulation. Binds to CUG triplet repeat in RNA. The chain is Muscleblind-like protein 1 (MBNL1) from Gallus gallus (Chicken).